An 872-amino-acid polypeptide reads, in one-letter code: MARQITLFDFTLKKEQNKDESRKEEIPHANINEERRKPKEWIKEAEEGKSYFLLQVDYDGKKSKAICKLYDKETKKIYILYDNTGHKPYFLTDIDPEKVNKIPKVVRDPSFDHLETVIKIDPYSGNKIKLTKIVVKDPLAVRRMRNSVPKAYEAHIKYFNNYIYDLGLIPGLPYVVKKGKLEQLRPELKGEEVDEIRKAFADSDEMTKEAVNDWIPIFESEVPDVKRVAIDIEVYTPIKGRIPDPEKAEFPIISISLAGNDGTKRVLVLLREDVNSQITKHDVIVETFKSERELIRRFFDIILDYPIILTFNGDDFDIPYIYYRALKLNFTPEEIPFDIINDEGKYLAGIHIDLYKFFFNRAIRNYAFEGKYNEYNLDAVATALLGMSKVKLDTLISFLDLDKLIEYNSRDAEITLKLTTFNNNLVWKLIILLARISKMGLEELTRTEVSTWIKNLYYWEHRRRNWLIPLKEEILTRSSQIKTAAIIKGKRYKGAVVIDPPAGVFFNVVVLDFASLYPSIIRNWNISYETVDVENCKNKEYVRDETGEVLHYICKDKPGITAVITGLLRDFRVKVYKKKAKSQNISEEQRSVYDVVQRAMKVFINATYGVFGAENFPLYAPAVAESVTAIGRYVITTTVNYCRSIGLQVLYGDTDSMFLWNPSKEKLEEIIKFVKGKFGLDLEVDKVYKFVAFSGLKKNYLGVYPDGKTDIKGMLAKKRNTPEFIKKEFNEVKQLVTTINSPDDIPKIRDQLEYKIKEIYEKLRHKGYNLDELAFRVMLSKPLESYTKNTPQHVKAALQLRSYGVMVLPRDIIMFVKVKSKDGVKPVQLAKLSEIDVDKYIDAVRSTFEQILKAFGLIGANLLQLLSILSLT.

Belongs to the DNA polymerase type-B family.

It carries out the reaction DNA(n) + a 2'-deoxyribonucleoside 5'-triphosphate = DNA(n+1) + diphosphate. This Sulfurisphaera ohwakuensis protein is DNA polymerase 1 (pol-alpha).